The chain runs to 102 residues: Small ribosomal subunit protein uS10 (102 aa).

The protein belongs to the universal ribosomal protein uS10 family. As to quaternary structure, part of the 30S ribosomal subunit.

In terms of biological role, involved in the binding of tRNA to the ribosomes. This Bifidobacterium adolescentis (strain ATCC 15703 / DSM 20083 / NCTC 11814 / E194a) protein is Small ribosomal subunit protein uS10.